The following is a 1649-amino-acid chain: DNA-directed RNA polymerase subunit beta' (1649 aa).

The Zn(2+) site is built by cysteine 63, cysteine 65, cysteine 78, and cysteine 81. Aspartate 747, aspartate 749, and aspartate 751 together coordinate Mg(2+). Zn(2+)-binding residues include cysteine 1078, cysteine 1269, cysteine 1276, and cysteine 1279.

This sequence belongs to the RNA polymerase beta' chain family. As to quaternary structure, the RNAP catalytic core consists of 2 alpha, 1 beta, 1 beta' and 1 omega subunit. When a sigma factor is associated with the core the holoenzyme is formed, which can initiate transcription. Mg(2+) is required as a cofactor. Zn(2+) serves as cofactor.

It catalyses the reaction RNA(n) + a ribonucleoside 5'-triphosphate = RNA(n+1) + diphosphate. DNA-dependent RNA polymerase catalyzes the transcription of DNA into RNA using the four ribonucleoside triphosphates as substrates. This Thermosipho melanesiensis (strain DSM 12029 / CIP 104789 / BI429) protein is DNA-directed RNA polymerase subunit beta'.